The primary structure comprises 37 residues: U10-ctenitoxin-Co1a (37 aa).

Disulfide bonds link Cys-2–Cys-17, Cys-9–Cys-22, Cys-16–Cys-33, and Cys-24–Cys-31.

In terms of tissue distribution, expressed by the venom gland.

The protein resides in the secreted. Its function is as follows. Antagonist of L-type calcium channels (Cav1/CACNA1). In Ctenus ornatus (Brazilian spider), this protein is U10-ctenitoxin-Co1a.